A 102-amino-acid chain; its full sequence is RNA-binding protein Hfq (102 aa).

Residues 9–68 form the Sm domain; the sequence is DPFVNALRRERVPVSIYLVNGIKLQGQIESFDQFVILLKNTVSQMVYKHAISTVVPSRPV. A disordered region spans residues 63-102; it reads VPSRPVSHHSNNAGGGASNNYHHGSNAQGSTAQQDSEETE. Low complexity predominate over residues 70–88; it reads HHSNNAGGGASNNYHHGSN.

The protein belongs to the Hfq family. Homohexamer.

Functionally, RNA chaperone that binds small regulatory RNA (sRNAs) and mRNAs to facilitate mRNA translational regulation in response to envelope stress, environmental stress and changes in metabolite concentrations. Also binds with high specificity to tRNAs. In Salmonella heidelberg (strain SL476), this protein is RNA-binding protein Hfq.